The chain runs to 263 residues: uncharacterized protein (263 aa).

An N-terminal signal peptide occupies residues Met-1–Gly-22. Residue Cys-23 is the site of N-palmitoyl cysteine attachment. Cys-23 carries the S-diacylglycerol cysteine lipid modification.

The protein belongs to the staphylococcal tandem lipoprotein family.

Its subcellular location is the cell membrane. This is an uncharacterized protein from Staphylococcus aureus (strain COL).